A 409-amino-acid polypeptide reads, in one-letter code: Glycosaminoglycan xylosylkinase (409 aa).

Topologically, residues methionine 1–arginine 6 are cytoplasmic. Residues valine 7–leucine 25 traverse the membrane as a helical; Signal-anchor for type II membrane protein segment. At aspartate 26 to proline 409 the chain is on the lumenal side. ATP-binding residues include glutamine 107 and lysine 123. Aspartate 142 is a Mn(2+) binding site. A glycan (N-linked (GlcNAc...) asparagine) is linked at asparagine 193. Disulfide bonds link cysteine 196/cysteine 211 and cysteine 201/cysteine 204. An ATP-binding site is contributed by threonine 222 to leucine 225. Intrachain disulfides connect cysteine 257–cysteine 331 and cysteine 332–cysteine 389. Aspartate 289 is an active-site residue. 2 residues coordinate ATP: glutamate 294 and aspartate 309. Aspartate 309 contacts Mn(2+).

This sequence belongs to the FAM20 family. Mn(2+) serves as cofactor.

The protein localises to the golgi apparatus membrane. It catalyses the reaction 3-O-(beta-D-galactosyl-(1-&gt;3)-beta-D-galactosyl-(1-&gt;4)-beta-D-xylosyl)-L-seryl-[protein] + ATP = 3-O-(beta-D-galactosyl-(1-&gt;3)-beta-D-galactosyl-(1-&gt;4)-beta-D-2-O-phosphoxylosyl)-L-seryl-[protein] + ADP + H(+). Responsible for the 2-O-phosphorylation of xylose in the glycosaminoglycan-protein linkage region of proteoglycans thereby regulating the amount of mature GAG chains. Sulfated glycosaminoglycans (GAGs), including heparan sulfate and chondroitin sulfate, are synthesized on the so-called common GAG-protein linkage region (GlcUAbeta1-3Galbeta1-3Galbeta1-4Xylbeta1-O-Ser) of core proteins, which is formed by the stepwise addition of monosaccharide residues by the respective specific glycosyltransferases. This Danio rerio (Zebrafish) protein is Glycosaminoglycan xylosylkinase.